Consider the following 132-residue polypeptide: Small ribosomal subunit protein uS11 (132 aa).

Positions 1 to 24 (MAAPKQAARKPRRRDRKSVPVGQA) are disordered. Basic residues predominate over residues 7-16 (AARKPRRRDR).

Belongs to the universal ribosomal protein uS11 family. Part of the 30S ribosomal subunit. Interacts with proteins S7 and S18. Binds to IF-3.

Its function is as follows. Located on the platform of the 30S subunit, it bridges several disparate RNA helices of the 16S rRNA. Forms part of the Shine-Dalgarno cleft in the 70S ribosome. The sequence is that of Small ribosomal subunit protein uS11 from Bifidobacterium longum (strain DJO10A).